The following is a 100-amino-acid chain: Urease subunit gamma (100 aa).

The protein belongs to the urease gamma subunit family. In terms of assembly, heterotrimer of UreA (gamma), UreB (beta) and UreC (alpha) subunits. Three heterotrimers associate to form the active enzyme.

The protein resides in the cytoplasm. It catalyses the reaction urea + 2 H2O + H(+) = hydrogencarbonate + 2 NH4(+). Its pathway is nitrogen metabolism; urea degradation; CO(2) and NH(3) from urea (urease route): step 1/1. The chain is Urease subunit gamma from Rhodopseudomonas palustris (strain ATCC BAA-98 / CGA009).